A 385-amino-acid polypeptide reads, in one-letter code: Glutamate 5-kinase (385 aa).

Residue Lys-18 participates in ATP binding. Positions 57, 144, and 156 each coordinate substrate. 218 to 224 (TGGMKSK) serves as a coordination point for ATP. A PUA domain is found at 283-361 (RGVLSIDAGA…SRIEQVLGHK (79 aa)).

This sequence belongs to the glutamate 5-kinase family.

It localises to the cytoplasm. The enzyme catalyses L-glutamate + ATP = L-glutamyl 5-phosphate + ADP. It participates in amino-acid biosynthesis; L-proline biosynthesis; L-glutamate 5-semialdehyde from L-glutamate: step 1/2. Catalyzes the transfer of a phosphate group to glutamate to form L-glutamate 5-phosphate. This Syntrophus aciditrophicus (strain SB) protein is Glutamate 5-kinase.